The chain runs to 338 residues: Lipoyl synthase (338 aa).

A disordered region spans residues 1–24 (MTTVQEAVPNLIPTQDATPRPAPK). C84, C89, C95, C110, C114, C117, and S324 together coordinate [4Fe-4S] cluster. In terms of domain architecture, Radical SAM core spans 96–313 (FSGGTATFMI…AEEGYKMGFK (218 aa)).

Belongs to the radical SAM superfamily. Lipoyl synthase family. [4Fe-4S] cluster is required as a cofactor.

It localises to the cytoplasm. The enzyme catalyses [[Fe-S] cluster scaffold protein carrying a second [4Fe-4S](2+) cluster] + N(6)-octanoyl-L-lysyl-[protein] + 2 oxidized [2Fe-2S]-[ferredoxin] + 2 S-adenosyl-L-methionine + 4 H(+) = [[Fe-S] cluster scaffold protein] + N(6)-[(R)-dihydrolipoyl]-L-lysyl-[protein] + 4 Fe(3+) + 2 hydrogen sulfide + 2 5'-deoxyadenosine + 2 L-methionine + 2 reduced [2Fe-2S]-[ferredoxin]. Its pathway is protein modification; protein lipoylation via endogenous pathway; protein N(6)-(lipoyl)lysine from octanoyl-[acyl-carrier-protein]: step 2/2. Catalyzes the radical-mediated insertion of two sulfur atoms into the C-6 and C-8 positions of the octanoyl moiety bound to the lipoyl domains of lipoate-dependent enzymes, thereby converting the octanoylated domains into lipoylated derivatives. In Pseudomonas putida (strain ATCC 700007 / DSM 6899 / JCM 31910 / BCRC 17059 / LMG 24140 / F1), this protein is Lipoyl synthase.